The primary structure comprises 204 residues: Probable proteasome subunit beta type-3 (204 aa).

Belongs to the peptidase T1B family. In terms of assembly, the 26S proteasome consists of a 20S proteasome core and two 19S regulatory subunits. The 20S proteasome core is composed of 28 subunits that are arranged in four stacked rings, resulting in a barrel-shaped structure. The two end rings are each formed by seven alpha subunits, and the two central rings are each formed by seven beta subunits. The catalytic chamber with the active sites is on the inside of the barrel.

Its subcellular location is the cytoplasm. The protein localises to the nucleus. In terms of biological role, non-catalytic component of the proteasome, a multicatalytic proteinase complex which is characterized by its ability to cleave peptides with Arg, Phe, Tyr, Leu, and Glu adjacent to the leaving group at neutral or slightly basic pH. The proteasome has an ATP-dependent proteolytic activity. This is Probable proteasome subunit beta type-3 (pup3) from Schizosaccharomyces pombe (strain 972 / ATCC 24843) (Fission yeast).